Reading from the N-terminus, the 281-residue chain is MAAGLITIKRRIQSITNTRKITKAMGLIATSTLRKARRNLDANLSYYSSFEDVMKKVSSGILGENIYTNGNGSKEKLYITMTSDAGLCGGFNGNVVNAAVSEISKDRENSLIMSVGQKGRGYFKRLQYDTIAEYVDIQNEPTLTEAKTISEHALSLYNKGEIGEINIVYSKFISTIKQDIIIKRVLPFDMKDIKYDGSIEFEPEINELIEGIVAVYLKSQLFNFLLNSKASEQASKMTAMDSATKNANELLDDLNLRYNRIRQSAITQEITEIVSGAEAQK.

The protein belongs to the ATPase gamma chain family. In terms of assembly, F-type ATPases have 2 components, CF(1) - the catalytic core - and CF(0) - the membrane proton channel. CF(1) has five subunits: alpha(3), beta(3), gamma(1), delta(1), epsilon(1). CF(0) has three main subunits: a, b and c.

The protein resides in the cell membrane. In terms of biological role, produces ATP from ADP in the presence of a proton gradient across the membrane. The gamma chain is believed to be important in regulating ATPase activity and the flow of protons through the CF(0) complex. The sequence is that of ATP synthase gamma chain from Clostridium pasteurianum.